The following is a 953-amino-acid chain: Coatomer subunit beta-1 (953 aa).

HEAT repeat units follow at residues 49 to 87 (ETLP…RDVA), 93 to 127 (PEMI…LNEP), 128 to 165 (ELLE…LPHG), 314 to 351 (DVMV…PRNV), and 393 to 430 (EVAG…TNPK).

In terms of assembly, oligomeric complex that consists of at least the alpha, beta, beta', gamma, delta, epsilon and zeta subunits.

The protein resides in the cytoplasm. The protein localises to the golgi apparatus membrane. Its subcellular location is the cytoplasmic vesicle. It is found in the COPI-coated vesicle membrane. The coatomer is a cytosolic protein complex that binds to dilysine motifs and reversibly associates with Golgi non-clathrin-coated vesicles, which further mediate biosynthetic protein transport from the ER, via the Golgi up to the trans Golgi network. Coatomer complex is required for budding from Golgi membranes, and is essential for the retrograde Golgi-to-ER transport of dilysine-tagged proteins. The chain is Coatomer subunit beta-1 from Oryza sativa subsp. japonica (Rice).